Here is a 422-residue protein sequence, read N- to C-terminus: Keratin, type II cytoskeletal 80 (422 aa).

A head region spans residues M1–N82. S45 bears the Phosphoserine mark. The tract at residues E83 to L118 is coil 1A. Positions E83–M394 constitute an IF rod domain. Positions Q119–Y135 are linker 1. Residues Q136–L227 are coil 1B. Residues A228 to I251 are linker 12. The segment at V252 to E390 is coil 2. Residues E391–L422 form a tail region.

This sequence belongs to the intermediate filament family. In terms of assembly, heterotetramer of two type I and two type II keratins.

This chain is Keratin, type II cytoskeletal 80 (KRT80), found in Bos taurus (Bovine).